The primary structure comprises 313 residues: Carbamate kinase (313 aa).

This sequence belongs to the carbamate kinase family.

The protein localises to the cytoplasm. It catalyses the reaction hydrogencarbonate + NH4(+) + ATP = carbamoyl phosphate + ADP + H2O + H(+). It participates in metabolic intermediate metabolism; carbamoyl phosphate degradation; CO(2) and NH(3) from carbamoyl phosphate: step 1/1. This chain is Carbamate kinase (arcC), found in Oenococcus oeni (Leuconostoc oenos).